The following is a 425-amino-acid chain: Histidine--tRNA ligase (425 aa).

It belongs to the class-II aminoacyl-tRNA synthetase family. As to quaternary structure, homodimer.

The protein resides in the cytoplasm. The catalysed reaction is tRNA(His) + L-histidine + ATP = L-histidyl-tRNA(His) + AMP + diphosphate + H(+). The polypeptide is Histidine--tRNA ligase (Aeromonas salmonicida (strain A449)).